A 214-amino-acid polypeptide reads, in one-letter code: Probable transaldolase (214 aa).

The active-site Schiff-base intermediate with substrate is the lysine 83.

Belongs to the transaldolase family. Type 3B subfamily.

The protein resides in the cytoplasm. It catalyses the reaction D-sedoheptulose 7-phosphate + D-glyceraldehyde 3-phosphate = D-erythrose 4-phosphate + beta-D-fructose 6-phosphate. The protein operates within carbohydrate degradation; pentose phosphate pathway; D-glyceraldehyde 3-phosphate and beta-D-fructose 6-phosphate from D-ribose 5-phosphate and D-xylulose 5-phosphate (non-oxidative stage): step 2/3. Functionally, transaldolase is important for the balance of metabolites in the pentose-phosphate pathway. The sequence is that of Probable transaldolase from Alkaliphilus metalliredigens (strain QYMF).